We begin with the raw amino-acid sequence, 230 residues long: Endonuclease NucS (230 aa).

This sequence belongs to the NucS endonuclease family.

It localises to the cytoplasm. Cleaves both 3' and 5' ssDNA extremities of branched DNA structures. In Corynebacterium glutamicum (strain ATCC 13032 / DSM 20300 / JCM 1318 / BCRC 11384 / CCUG 27702 / LMG 3730 / NBRC 12168 / NCIMB 10025 / NRRL B-2784 / 534), this protein is Endonuclease NucS.